A 273-amino-acid chain; its full sequence is Protein FAM210A (273 aa).

Residues 94–116 (RVLSSSSTSQETPSEKKEETDPL) are disordered. Residues 106–116 (PSEKKEETDPL) show a composition bias toward basic and acidic residues. The DUF1279 domain occupies 118–230 (DKSISLYQRF…GYMSTPPPVK (113 aa)). A helical membrane pass occupies residues 138-158 (LIPVHLITSGIWFGTFYYATI). Residues 233–269 (LQGRMEETKELITEKMEETKDRLTEKLQETKGKVSFK) are a coiled coil.

The protein belongs to the FAM210 family. In terms of assembly, interacts with ATAD3A. Expressed in skeletal muscle, heart, brain but not in bone.

The protein resides in the membrane. It localises to the mitochondrion. Its subcellular location is the cytoplasm. In terms of biological role, may play a role in the structure and strength of both muscle and bone. In Mus musculus (Mouse), this protein is Protein FAM210A (Fam210a).